The chain runs to 101 residues: Urease subunit beta (101 aa).

Belongs to the urease beta subunit family. In terms of assembly, heterotrimer of UreA (gamma), UreB (beta) and UreC (alpha) subunits. Three heterotrimers associate to form the active enzyme.

It is found in the cytoplasm. It carries out the reaction urea + 2 H2O + H(+) = hydrogencarbonate + 2 NH4(+). The protein operates within nitrogen metabolism; urea degradation; CO(2) and NH(3) from urea (urease route): step 1/1. The sequence is that of Urease subunit beta from Saccharophagus degradans (strain 2-40 / ATCC 43961 / DSM 17024).